The chain runs to 282 residues: MVPPRWGSLDSLKPQQHLPMTKKGILLAAFGSGNRQGESTLRLFDERVRERFPGVPVRWAFTSVIMRRRLAAARKKTDSVLKALQKMWFEKYTHVAVQSLHIIPGAEYGDLVADVEAMRRDDGFTAATVGAPLLAGSGDMERSAAALLAHLPAGRKPDEAVVFMGHGTRHPAESSYEALAALVRRVDPHVHIGTMGGSRTLDHILPELQQGGVKGVWLMPLLSVVGRHATEDMAGTDPESWKSRLEASGLRCIPVLRGTAEYEGFVDIWLDHLTAAVSALDD.

Histidine 166 acts as the Proton acceptor in catalysis. Co(2+) contacts are provided by histidine 166 and histidine 228.

This sequence belongs to the CbiK family.

It localises to the cytoplasm. The enzyme catalyses Co-sirohydrochlorin + 2 H(+) = sirohydrochlorin + Co(2+). It catalyses the reaction siroheme + 2 H(+) = sirohydrochlorin + Fe(2+). The protein operates within cofactor biosynthesis; adenosylcobalamin biosynthesis; cob(II)yrinate a,c-diamide from sirohydrochlorin (anaerobic route): step 1/10. It functions in the pathway porphyrin-containing compound metabolism; siroheme biosynthesis; siroheme from sirohydrochlorin: step 1/1. Its function is as follows. Catalyzes the insertion of Co(2+) into sirohydrochlorin as part of the anaerobic pathway to cobalamin biosynthesis. To a lesser extent, is also able to insert Fe(2+) into sirohydrochlorin, yielding siroheme. The polypeptide is Sirohydrochlorin cobaltochelatase CbiKC (cbiKc) (Nitratidesulfovibrio vulgaris (strain ATCC 29579 / DSM 644 / CCUG 34227 / NCIMB 8303 / VKM B-1760 / Hildenborough) (Desulfovibrio vulgaris)).